Consider the following 481-residue polypeptide: Proline--tRNA ligase (481 aa).

Belongs to the class-II aminoacyl-tRNA synthetase family. ProS type 3 subfamily. As to quaternary structure, homodimer.

The protein resides in the cytoplasm. It carries out the reaction tRNA(Pro) + L-proline + ATP = L-prolyl-tRNA(Pro) + AMP + diphosphate. Its function is as follows. Catalyzes the attachment of proline to tRNA(Pro) in a two-step reaction: proline is first activated by ATP to form Pro-AMP and then transferred to the acceptor end of tRNA(Pro). The polypeptide is Proline--tRNA ligase (Saccharolobus islandicus (strain M.16.27) (Sulfolobus islandicus)).